The chain runs to 121 residues: Large ribosomal subunit protein bL12 (121 aa).

It belongs to the bacterial ribosomal protein bL12 family. Homodimer. Part of the ribosomal stalk of the 50S ribosomal subunit. Forms a multimeric L10(L12)X complex, where L10 forms an elongated spine to which 2 to 4 L12 dimers bind in a sequential fashion. Binds GTP-bound translation factors.

Functionally, forms part of the ribosomal stalk which helps the ribosome interact with GTP-bound translation factors. Is thus essential for accurate translation. The protein is Large ribosomal subunit protein bL12 of Streptococcus suis (strain 98HAH33).